A 527-amino-acid polypeptide reads, in one-letter code: Bifunctional purine biosynthesis protein PurH (527 aa).

The region spanning 1-149 (MASDFLPVRR…KNFARVAVAA (149 aa)) is the MGS-like domain.

Belongs to the PurH family.

The catalysed reaction is (6R)-10-formyltetrahydrofolate + 5-amino-1-(5-phospho-beta-D-ribosyl)imidazole-4-carboxamide = 5-formamido-1-(5-phospho-D-ribosyl)imidazole-4-carboxamide + (6S)-5,6,7,8-tetrahydrofolate. The enzyme catalyses IMP + H2O = 5-formamido-1-(5-phospho-D-ribosyl)imidazole-4-carboxamide. It participates in purine metabolism; IMP biosynthesis via de novo pathway; 5-formamido-1-(5-phospho-D-ribosyl)imidazole-4-carboxamide from 5-amino-1-(5-phospho-D-ribosyl)imidazole-4-carboxamide (10-formyl THF route): step 1/1. The protein operates within purine metabolism; IMP biosynthesis via de novo pathway; IMP from 5-formamido-1-(5-phospho-D-ribosyl)imidazole-4-carboxamide: step 1/1. The protein is Bifunctional purine biosynthesis protein PurH of Xanthomonas axonopodis pv. citri (strain 306).